Here is a 225-residue protein sequence, read N- to C-terminus: Uracil-DNA glycosylase 1 (225 aa).

Asp-68 serves as the catalytic Proton acceptor.

Belongs to the uracil-DNA glycosylase (UDG) superfamily. UNG family.

It localises to the cytoplasm. The catalysed reaction is Hydrolyzes single-stranded DNA or mismatched double-stranded DNA and polynucleotides, releasing free uracil.. In terms of biological role, excises uracil residues from the DNA which can arise as a result of misincorporation of dUMP residues by DNA polymerase or due to deamination of cytosine. This is Uracil-DNA glycosylase 1 (ung1) from Streptomyces coelicolor (strain ATCC BAA-471 / A3(2) / M145).